Reading from the N-terminus, the 245-residue chain is uncharacterized protein (245 aa).

This is an uncharacterized protein from Rhodobacter capsulatus (Rhodopseudomonas capsulata).